The chain runs to 697 residues: Lebercilin (697 aa).

Residues 1–90 (MGERAGSPGT…VGFRSQSLNR (90 aa)) form a disordered region. Residues Ser7 and Ser45 each carry the phosphoserine modification. Positions 32 to 45 (SSGRSSLVSSSPAS) are enriched in low complexity. Coiled coils occupy residues 103–297 (RILS…IKNI) and 389–485 (EEKF…RNLK). Disordered regions lie at residues 412-432 (WERE…EREE), 522-548 (HHLQ…PASP), and 606-697 (EQLF…VALR). Residues 416–432 (ELDKKQKEKASLLEREE) are compositionally biased toward basic and acidic residues. Residues 527–547 (ISFSTPKGEGQNSGNVRSPAS) are compositionally biased toward polar residues. Low complexity predominate over residues 612-626 (SGSSTISSKSSDPNS). The segment covering 686 to 697 (SVEDEIEEVALR) has biased composition (acidic residues).

Belongs to the LCA5 family. In terms of assembly, interacts with NINL. Interacts with OFD1. Interacts with FAM161A. Interacts with components of the IFT complex B. In terms of tissue distribution, widely expressed.

Its subcellular location is the cytoplasm. It is found in the cytoskeleton. The protein resides in the cilium axoneme. The protein localises to the cilium basal body. It localises to the microtubule organizing center. Its subcellular location is the centrosome. It is found in the cell projection. The protein resides in the cilium. Functionally, involved in intraflagellar protein (IFT) transport in photoreceptor cilia. This Homo sapiens (Human) protein is Lebercilin (LCA5).